A 129-amino-acid chain; its full sequence is Small ribosomal subunit protein uS8 (129 aa).

The protein belongs to the universal ribosomal protein uS8 family. Part of the 30S ribosomal subunit.

One of the primary rRNA binding proteins, it binds directly to 16S rRNA central domain where it helps coordinate assembly of the platform of the 30S subunit. The sequence is that of Small ribosomal subunit protein uS8 from Thermofilum pendens (strain DSM 2475 / Hrk 5).